Reading from the N-terminus, the 111-residue chain is MSGTFEIYNDKAGEFRFRLKANNGQAILASEGYKDKSGCLNGVESVKKNAPDDARYERKASGADKFMFNLKAGNHQVVGTSQSYASEASRDKGIESVKNHAPDAKVVEVGN.

2 consecutive repeat copies span residues 10–58 and 61–109.

The protein belongs to the UPF0339 family. Duplicated subfamily.

The protein is UPF0339 protein in ptx operon 5'region of Stutzerimonas stutzeri (Pseudomonas stutzeri).